Reading from the N-terminus, the 123-residue chain is Large ribosomal subunit protein uL29 (123 aa).

Lys19 is subject to N6-acetyllysine. Lys25 is covalently cross-linked (Glycyl lysine isopeptide (Lys-Gly) (interchain with G-Cter in SUMO2)). Ser29 carries the phosphoserine modification. An N6-acetyllysine modification is found at Lys43. Residues 95 to 114 form a disordered region; that stretch reads LNKHEENLKTKKQQRKERLY.

The protein belongs to the universal ribosomal protein uL29 family. As to quaternary structure, component of the large ribosomal subunit.

The protein resides in the cytoplasm. Its function is as follows. Component of the large ribosomal subunit. The ribosome is a large ribonucleoprotein complex responsible for the synthesis of proteins in the cell. The protein is Large ribosomal subunit protein uL29 (RPL35) of Bos taurus (Bovine).